Consider the following 518-residue polypeptide: Glutamate--cysteine ligase (518 aa).

The protein belongs to the glutamate--cysteine ligase type 1 family. Type 1 subfamily.

The catalysed reaction is L-cysteine + L-glutamate + ATP = gamma-L-glutamyl-L-cysteine + ADP + phosphate + H(+). It participates in sulfur metabolism; glutathione biosynthesis; glutathione from L-cysteine and L-glutamate: step 1/2. This is Glutamate--cysteine ligase from Salmonella gallinarum (strain 287/91 / NCTC 13346).